The chain runs to 196 residues: Translation initiation factor IF-3 (196 aa).

This sequence belongs to the IF-3 family. As to quaternary structure, monomer.

The protein localises to the cytoplasm. In terms of biological role, IF-3 binds to the 30S ribosomal subunit and shifts the equilibrium between 70S ribosomes and their 50S and 30S subunits in favor of the free subunits, thus enhancing the availability of 30S subunits on which protein synthesis initiation begins. This chain is Translation initiation factor IF-3, found in Wigglesworthia glossinidia brevipalpis.